We begin with the raw amino-acid sequence, 204 residues long: Large ribosomal subunit protein uL3c (204 aa).

A disordered region spans residues 126–155 (HNFTRGPMTHGSKNHREPGSIGQGSTPAKV).

Belongs to the universal ribosomal protein uL3 family. In terms of assembly, part of the 50S ribosomal subunit.

It localises to the plastid. It is found in the chloroplast. Functionally, one of the primary rRNA binding proteins, it binds directly near the 3'-end of the 23S rRNA, where it nucleates assembly of the 50S subunit. This Guillardia theta (Cryptophyte) protein is Large ribosomal subunit protein uL3c (rpl3).